Here is a 285-residue protein sequence, read N- to C-terminus: Probable endonuclease 4 (285 aa).

The Zn(2+) site is built by His-69, His-109, Glu-145, Asp-179, His-182, His-216, Asp-229, His-231, and Glu-261.

The protein belongs to the AP endonuclease 2 family. Zn(2+) serves as cofactor.

It carries out the reaction Endonucleolytic cleavage to 5'-phosphooligonucleotide end-products.. Endonuclease IV plays a role in DNA repair. It cleaves phosphodiester bonds at apurinic or apyrimidinic (AP) sites, generating a 3'-hydroxyl group and a 5'-terminal sugar phosphate. The polypeptide is Probable endonuclease 4 (Yersinia pestis bv. Antiqua (strain Antiqua)).